The primary structure comprises 437 residues: Neomycin resistance protein (437 aa).

Disordered stretches follow at residues 161–285 (GQRG…EEEA) and 305–338 (VSGA…PVPD). A compositionally biased stretch (low complexity) spans 203–229 (PPTGARSPGATAGARATASTSSSSVRS). Positions 324 to 338 (RRRHRGRRHGRPVPD) are enriched in basic residues.

It belongs to the Gram-positive plasmids replication protein type 1 family.

This Streptomyces cyanogenus protein is Neomycin resistance protein.